The sequence spans 1028 residues: U2 snRNP-associated SURP motif-containing protein (1028 aa).

2 disordered regions span residues 1–111 (MADK…EDEK) and 141–272 (VNAA…DPST). The residue at position 2 (Ala-2) is an N-acetylalanine. Over residues 7–16 (GGSQKASSKT) the composition is skewed to polar residues. The segment covering 45–54 (TRPKSPRKHN) has biased composition (basic residues). Residues 55 to 64 (YRNESARESL) show a composition bias toward basic and acidic residues. Ser-67 is subject to Phosphoserine. Lys-80 is covalently cross-linked (Glycyl lysine isopeptide (Lys-Gly) (interchain with G-Cter in SUMO2)). Residues 92–121 (AKRTLSKKEQEELKKKEDEKAAAEIYEEFL) adopt a coiled-coil conformation. Composition is skewed to basic and acidic residues over residues 97–111 (SKKEQEELKKKEDEK) and 144–155 (AKEEHETDEKRG). Residues Lys-145 and Lys-168 each participate in a glycyl lysine isopeptide (Lys-Gly) (interchain with G-Cter in SUMO2) cross-link. Residues 169 to 178 (NPPNQSSNER) show a composition bias toward polar residues. Residues 186 to 222 (ETKKPPLKKGEKEKKKSNLELFKEELKQIQEERDERH) show a composition bias toward basic and acidic residues. A coiled-coil region spans residues 192–232 (LKKGEKEKKKSNLELFKEELKQIQEERDERHKTKGRLSRFE). Ser-202 is modified (phosphoserine). Lys-208 is covalently cross-linked (Glycyl lysine isopeptide (Lys-Gly) (interchain with G-Cter in SUMO2)). Residue Ser-236 is modified to Phosphoserine. The segment covering 239-249 (DGQRRSMDAPS) has biased composition (basic and acidic residues). Residues 273–354 (TNLYLGNINP…FEMKLGWGKA (82 aa)) enclose the RRM domain. The stretch at 429-472 (LIHRMIEFVVREGPMFEAMIMNREINNPMFRFLFENQTPAHVYY) is one SURP motif repeat. Ser-484 carries the phosphoserine modification. Positions 533–678 (LKEEQRDKLE…KLQNIFLGLV (146 aa)) constitute a CID domain. Thr-718 carries the phosphothreonine modification. Residues Lys-747 and Lys-748 each participate in a glycyl lysine isopeptide (Lys-Gly) (interchain with G-Cter in SUMO2) cross-link. Lys-759 is modified (N6-acetyllysine; alternate). Lys-759 is covalently cross-linked (Glycyl lysine isopeptide (Lys-Gly) (interchain with G-Cter in SUMO2); alternate). Disordered regions lie at residues 777-840 (KWEL…EEKR) and 854-1028 (QDEL…KNKH). A coiled-coil region spans residues 779–809 (ELFDQHEESEEEENQNQEEESEDEEDTQSSK). A compositionally biased stretch (acidic residues) spans 785–805 (EESEEEENQNQEEESEDEEDT). Residues Ser-787, Ser-799, and Ser-810 each carry the phosphoserine modification. Basic and acidic residues-rich tracts occupy residues 809 to 840 (KSEEHHLYSNPIKEEMTESKFSKYSEMSEEKR) and 873 to 921 (QVEH…TPTR). Residues Lys-821, Lys-828, and Lys-831 each participate in a glycyl lysine isopeptide (Lys-Gly) (interchain with G-Cter in SUMO2) cross-link. Positions 836–914 (SEEKRAKLRE…ESRSKDEKEK (79 aa)) form a coiled coil. The residue at position 930 (Thr-930) is a Phosphothreonine. Ser-945 and Ser-947 each carry phosphoserine. A compositionally biased stretch (basic and acidic residues) spans 949–979 (KSERSERSERSHKESSRSRSSHKDSPRDVSK). The span at 990–1028 (TPKRSRRSRSRSPKKSGKKSRSQSRSPHRSHKKSKKNKH) shows a compositional bias: basic residues.

This sequence belongs to the splicing factor SR family. In terms of assembly, interacts with ERBB4.

Its subcellular location is the nucleus. In Pongo abelii (Sumatran orangutan), this protein is U2 snRNP-associated SURP motif-containing protein (U2SURP).